A 276-amino-acid chain; its full sequence is Aquaporin-6 (276 aa).

The Cytoplasmic segment spans residues 1 to 22 (MEPGLCNRAYLLVGGLWTAISK). The helical transmembrane segment at 23 to 43 (ALFAEFLATGLYVFFGVGSVL) threads the bilayer. Residues 44-51 (PWPVALPS) are Extracellular-facing. Residues 52–70 (VLQVAITFNLATATAVQIS) traverse the membrane as a helical segment. Residues 71–75 (WKTSG) are Cytoplasmic-facing. Residues 76–85 (AHANPAVTLA) constitute an intramembrane region (discontinuously helical). Residues 79–81 (NPA) carry the NPA 1 motif. The Cytoplasmic segment spans residues 86-96 (YLVGSHISLPR). The chain crosses the membrane as a helical span at residues 97–118 (AVAYIAAQLAGATVGAALLYGV). Residues 119-138 (TPGGVRETLGVNVVHNSTST) are Extracellular-facing. Asn-134 carries an N-linked (GlcNAc...) asparagine glycan. A helical membrane pass occupies residues 139 to 159 (GQAVAVELVLTLQLVLCVFAS). At 160–165 (MDSRQT) the chain is on the cytoplasmic side. Residues 166 to 185 (LGSPAAMIGTSVALGHLIGI) traverse the membrane as a helical segment. Residues 186 to 189 (YFTG) lie on the Extracellular side of the membrane. Positions 190 to 202 (CSMNPARSFGPAV) form an intramembrane region, discontinuously helical. The short motif at 193–195 (NPA) is the NPA 2 element. The Extracellular segment spans residues 203–210 (IVGKFAVH). The chain crosses the membrane as a helical span at residues 211 to 231 (WIFWVGPLTGAVLASLIYNFI). The Cytoplasmic portion of the chain corresponds to 232 to 276 (LFPDTKTVAQRLAILVGTTKVEKVVDLEPQKKESQTNSEDTEVSV).

This sequence belongs to the MIP/aquaporin (TC 1.A.8) family. In terms of assembly, homotetramer; each monomer provides an independent solute pore. Post-translationally, N-glycosylated. In terms of tissue distribution, kidney.

Its subcellular location is the cytoplasmic vesicle membrane. The enzyme catalyses nitrate(in) = nitrate(out). It catalyses the reaction iodide(out) = iodide(in). It carries out the reaction bromide(in) = bromide(out). The catalysed reaction is chloride(in) = chloride(out). The enzyme catalyses Na(+)(in) = Na(+)(out). It catalyses the reaction H2O(in) = H2O(out). It carries out the reaction CO2(out) = CO2(in). The catalysed reaction is NH4(+)(in) = NH4(+)(out). Its activity is regulated as follows. Activated by mercury and pH-gated, anion permeability is observed at pH 5.5 and increases markedly at pH 4.0. Selectivity for chloride increases at low pH. The water channel activity is stimulated by mercury by opposition to other aquaporins. Aquaporins form homotetrameric transmembrane channels, with each monomer independently mediating water transport across the plasma membrane along its osmotic gradient. Unlike classical aquaporins, AQP6 is an intracellular channel with selective anion permeability, particularly for nitrate, and exhibits very low water permeability. It may also facilitate the transport of gases, such as CO2 and NH4(+), as demonstrated in vitro. This Rattus norvegicus (Rat) protein is Aquaporin-6.